Reading from the N-terminus, the 120-residue chain is NAD(P)H-quinone oxidoreductase subunit 3, chloroplastic (120 aa).

The next 3 helical transmembrane spans lie at 9–29 (IFWAFLIISSAIPFLAFLISG), 64–84 (MFALVFVVFDVETVFLYPWAM), and 88–108 (VLGVSAFIEAFIFVLILILGL).

It belongs to the complex I subunit 3 family. In terms of assembly, NDH is composed of at least 16 different subunits, 5 of which are encoded in the nucleus.

It is found in the plastid. It localises to the chloroplast thylakoid membrane. The catalysed reaction is a plastoquinone + NADH + (n+1) H(+)(in) = a plastoquinol + NAD(+) + n H(+)(out). It catalyses the reaction a plastoquinone + NADPH + (n+1) H(+)(in) = a plastoquinol + NADP(+) + n H(+)(out). Functionally, NDH shuttles electrons from NAD(P)H:plastoquinone, via FMN and iron-sulfur (Fe-S) centers, to quinones in the photosynthetic chain and possibly in a chloroplast respiratory chain. The immediate electron acceptor for the enzyme in this species is believed to be plastoquinone. Couples the redox reaction to proton translocation, and thus conserves the redox energy in a proton gradient. This chain is NAD(P)H-quinone oxidoreductase subunit 3, chloroplastic, found in Aethionema cordifolium (Lebanon stonecress).